Here is a 348-residue protein sequence, read N- to C-terminus: Phosphate acyltransferase (348 aa).

This sequence belongs to the PlsX family. In terms of assembly, homodimer. Probably interacts with PlsY.

The protein resides in the cytoplasm. It catalyses the reaction a fatty acyl-[ACP] + phosphate = an acyl phosphate + holo-[ACP]. It functions in the pathway lipid metabolism; phospholipid metabolism. In terms of biological role, catalyzes the reversible formation of acyl-phosphate (acyl-PO(4)) from acyl-[acyl-carrier-protein] (acyl-ACP). This enzyme utilizes acyl-ACP as fatty acyl donor, but not acyl-CoA. The chain is Phosphate acyltransferase from Lactiplantibacillus plantarum (strain ATCC BAA-793 / NCIMB 8826 / WCFS1) (Lactobacillus plantarum).